Reading from the N-terminus, the 451-residue chain is Glutamyl-tRNA reductase (451 aa).

Residues 49 to 52 (TCNR), S109, 114 to 116 (EQQ), and Q120 contribute to the substrate site. C50 acts as the Nucleophile in catalysis. 190–195 (GAGAMG) contributes to the NADP(+) binding site.

It belongs to the glutamyl-tRNA reductase family. As to quaternary structure, homodimer.

It catalyses the reaction (S)-4-amino-5-oxopentanoate + tRNA(Glu) + NADP(+) = L-glutamyl-tRNA(Glu) + NADPH + H(+). Its pathway is porphyrin-containing compound metabolism; protoporphyrin-IX biosynthesis; 5-aminolevulinate from L-glutamyl-tRNA(Glu): step 1/2. Functionally, catalyzes the NADPH-dependent reduction of glutamyl-tRNA(Glu) to glutamate 1-semialdehyde (GSA). This is Glutamyl-tRNA reductase from Mycolicibacterium smegmatis (strain ATCC 700084 / mc(2)155) (Mycobacterium smegmatis).